A 430-amino-acid chain; its full sequence is Tol-Pal system protein TolB (430 aa).

An N-terminal signal peptide occupies residues 1–21 (MKQALRVAFGFLMLWAAMLHA).

The protein belongs to the TolB family. As to quaternary structure, the Tol-Pal system is composed of five core proteins: the inner membrane proteins TolA, TolQ and TolR, the periplasmic protein TolB and the outer membrane protein Pal. They form a network linking the inner and outer membranes and the peptidoglycan layer.

Its subcellular location is the periplasm. Functionally, part of the Tol-Pal system, which plays a role in outer membrane invagination during cell division and is important for maintaining outer membrane integrity. TolB occupies a key intermediary position in the Tol-Pal system because it communicates directly with both membrane-embedded components, Pal in the outer membrane and TolA in the inner membrane. In Escherichia fergusonii (strain ATCC 35469 / DSM 13698 / CCUG 18766 / IAM 14443 / JCM 21226 / LMG 7866 / NBRC 102419 / NCTC 12128 / CDC 0568-73), this protein is Tol-Pal system protein TolB.